The sequence spans 276 residues: Pirin-like protein CC_0481 (276 aa).

The protein belongs to the pirin family.

The polypeptide is Pirin-like protein CC_0481 (Caulobacter vibrioides (strain ATCC 19089 / CIP 103742 / CB 15) (Caulobacter crescentus)).